The following is a 95-amino-acid chain: Aspartyl/glutamyl-tRNA(Asn/Gln) amidotransferase subunit C (95 aa).

It belongs to the GatC family. In terms of assembly, heterotrimer of A, B and C subunits.

It catalyses the reaction L-glutamyl-tRNA(Gln) + L-glutamine + ATP + H2O = L-glutaminyl-tRNA(Gln) + L-glutamate + ADP + phosphate + H(+). The catalysed reaction is L-aspartyl-tRNA(Asn) + L-glutamine + ATP + H2O = L-asparaginyl-tRNA(Asn) + L-glutamate + ADP + phosphate + 2 H(+). Its function is as follows. Allows the formation of correctly charged Asn-tRNA(Asn) or Gln-tRNA(Gln) through the transamidation of misacylated Asp-tRNA(Asn) or Glu-tRNA(Gln) in organisms which lack either or both of asparaginyl-tRNA or glutaminyl-tRNA synthetases. The reaction takes place in the presence of glutamine and ATP through an activated phospho-Asp-tRNA(Asn) or phospho-Glu-tRNA(Gln). The polypeptide is Aspartyl/glutamyl-tRNA(Asn/Gln) amidotransferase subunit C (Chlorobium limicola (strain DSM 245 / NBRC 103803 / 6330)).